Here is a 1097-residue protein sequence, read N- to C-terminus: Kinesin-like protein KIF1C (1097 aa).

The Kinesin motor domain maps to 5–347; it reads SVKVAVRVRP…LRYADRTKQI (343 aa). ATP is bound at residue 96–103; that stretch reads GQTGAGKS. The residue at position 294 (serine 294) is a Phosphoserine. Residues 358–380 adopt a coiled-coil conformation; that stretch reads NARLIRELQEEVARLRELLMAQG. The disordered stretch occupies residues 397–434; sequence GGVLPAASSPPAPASPSSPPPHNGELEPSFSPSAEPQI. Pro residues predominate over residues 404 to 418; it reads SSPPAPASPSSPPPH. Positions 437-478 form a coiled coil; it reads EEAMERLQETEKIIAELNETWEEKLRKTEALRMEREALLAEM. Serine 491 is subject to Phosphoserine. Residues 520 to 587 form the FHA domain; the sequence is TRVGQVDVDI…LKSGNRIVMG (68 aa). A coiled-coil region spans residues 630-671; sequence EQQGIDIKLEMEKRLQDLENQYRKEKEEADLLLEQQRLYADS. 2 positions are modified to phosphoserine: serine 671 and serine 673. The stretch at 824 to 868 forms a coiled coil; sequence AEVEDLRAHIDKLTGILQEVKLQNSSKDRELQALRDRMLRMERVI. Disordered stretches follow at residues 897-921 and 946-1097; these read EAVS…ERVS and QGLQ…GAAV. Serine 911 is modified (phosphoserine). A compositionally biased stretch (gly residues) spans 949–958; that stretch reads QGSGGRGGGL. Residues 997–1015 are compositionally biased toward pro residues; sequence GPQPPEEVTAPPPPPNRRP. The span at 1016-1026 shows a compositional bias: basic residues; that stretch reads PSPRRPHRPRR. Residue serine 1028 is modified to Phosphoserine. The residue at position 1036 (arginine 1036) is an Omega-N-methylarginine. The span at 1059–1077 shows a compositional bias: pro residues; it reads QPQPYPAQRPGPRYPPYTT. Threonine 1077 carries the post-translational modification Phosphothreonine. Serine 1086 is subject to Phosphoserine. The segment covering 1086-1097 has biased composition (basic and acidic residues); that stretch reads SAPDLKESGAAV.

The protein belongs to the TRAFAC class myosin-kinesin ATPase superfamily. Kinesin family. Unc-104 subfamily.

Its subcellular location is the cytoplasm. It localises to the cytoskeleton. Probable motor protein. The sequence is that of Kinesin-like protein KIF1C (Kif1c) from Rattus norvegicus (Rat).